We begin with the raw amino-acid sequence, 263 residues long: Hydroxyethylthiazole kinase (263 aa).

Met41 is a binding site for substrate. ATP is bound by residues Arg117 and Thr163. Gly190 is a binding site for substrate.

It belongs to the Thz kinase family. Mg(2+) serves as cofactor.

It catalyses the reaction 5-(2-hydroxyethyl)-4-methylthiazole + ATP = 4-methyl-5-(2-phosphooxyethyl)-thiazole + ADP + H(+). It functions in the pathway cofactor biosynthesis; thiamine diphosphate biosynthesis; 4-methyl-5-(2-phosphoethyl)-thiazole from 5-(2-hydroxyethyl)-4-methylthiazole: step 1/1. Functionally, catalyzes the phosphorylation of the hydroxyl group of 4-methyl-5-beta-hydroxyethylthiazole (THZ). The chain is Hydroxyethylthiazole kinase from Exiguobacterium sp. (strain ATCC BAA-1283 / AT1b).